A 967-amino-acid polypeptide reads, in one-letter code: Leucine--tRNA ligase (967 aa).

A 'HIGH' region motif is present at residues 43 to 53 (PYLSGHLHVGH). The 'KMSKS' region signature appears at 650–654 (KMSKS). Position 653 (K653) interacts with ATP.

It belongs to the class-I aminoacyl-tRNA synthetase family.

It is found in the cytoplasm. The catalysed reaction is tRNA(Leu) + L-leucine + ATP = L-leucyl-tRNA(Leu) + AMP + diphosphate. The chain is Leucine--tRNA ligase from Thermococcus kodakarensis (strain ATCC BAA-918 / JCM 12380 / KOD1) (Pyrococcus kodakaraensis (strain KOD1)).